The following is a 283-amino-acid chain: 4-diphosphocytidyl-2-C-methyl-D-erythritol kinase (283 aa).

Lys10 is an active-site residue. Position 99–109 (99–109) interacts with ATP; the sequence is PMGGGLGGGSS. Residue Asp141 is part of the active site.

The protein belongs to the GHMP kinase family. IspE subfamily. Homodimer.

It catalyses the reaction 4-CDP-2-C-methyl-D-erythritol + ATP = 4-CDP-2-C-methyl-D-erythritol 2-phosphate + ADP + H(+). It functions in the pathway isoprenoid biosynthesis; isopentenyl diphosphate biosynthesis via DXP pathway; isopentenyl diphosphate from 1-deoxy-D-xylulose 5-phosphate: step 3/6. Functionally, catalyzes the phosphorylation of the position 2 hydroxy group of 4-diphosphocytidyl-2C-methyl-D-erythritol. This is 4-diphosphocytidyl-2-C-methyl-D-erythritol kinase from Shigella dysenteriae serotype 1 (strain Sd197).